The chain runs to 193 residues: Iron-sulfur flavoprotein MJ1083 (193 aa).

Residues Cys47, Cys50, Cys53, and Cys59 each contribute to the [4Fe-4S] cluster site.

Belongs to the SsuE family. Isf subfamily. Homodimer. It depends on FMN as a cofactor. Requires [4Fe-4S] cluster as cofactor.

Redox-active protein probably involved in electron transport. This chain is Iron-sulfur flavoprotein MJ1083, found in Methanocaldococcus jannaschii (strain ATCC 43067 / DSM 2661 / JAL-1 / JCM 10045 / NBRC 100440) (Methanococcus jannaschii).